Consider the following 156-residue polypeptide: RNA polymerase sigma factor SigS (156 aa).

Residues 29-44 (EYYQLLLIKMWQLSQI) carry the Polymerase core binding motif. The segment at residues 126–145 (QFEIAEIMSLSLSTIKLIKT) is a DNA-binding region (H-T-H motif).

This sequence belongs to the sigma-70 factor family.

Its function is as follows. Sigma factors are initiation factors that promote the attachment of RNA polymerase to specific initiation sites and are then released. Sigma-S contributes to the protection against external stress, thus playing a role in cellular fitness and survival. The sequence is that of RNA polymerase sigma factor SigS (sigS) from Staphylococcus aureus (strain bovine RF122 / ET3-1).